The following is a 1913-amino-acid chain: Protein TIC 214 (1913 aa).

Transmembrane regions (helical) follow at residues 18–38 (IINSVVVVGLYYGFLTTFSIG), 64–84 (FITGQLMMFISIYYAPLHLAL), 124–144 (LSIQCVFLTNLIFQLFNHLML), 172–192 (VGWLIGHILFMKWVGLVVSWI), and 214–234 (LKSAIAQILSIIFFIACVNYL). Disordered regions lie at residues 245-330 (KLNE…ETEE), 707-734 (YTDKNQNRDQDPNPNTDNTTTENDNSDT), and 1605-1652 (EKED…RKKK). Over residues 260–289 (KESQKSKESEEERDVEKETTSETKETKQEQ) the composition is skewed to basic and acidic residues. The span at 303–314 (EKEDPDKIDETE) shows a compositional bias: acidic residues. Residues 315–330 (EIRVNGKEKKKDETEE) show a composition bias toward basic and acidic residues. Residues 718–729 (PNPNTDNTTTEN) show a composition bias toward low complexity.

The protein belongs to the TIC214 family. As to quaternary structure, part of the Tic complex.

Its subcellular location is the plastid. The protein resides in the chloroplast inner membrane. Involved in protein precursor import into chloroplasts. May be part of an intermediate translocation complex acting as a protein-conducting channel at the inner envelope. The chain is Protein TIC 214 from Acorus calamus var. americanus (American sweet flag).